The sequence spans 186 residues: Ran guanine nucleotide release factor (186 aa).

The interval 27–70 is interaction with RAN; it reads DLRPVPDHQEVFCHRVTDQSLIVELLELQAHVQGEEAARYHFED.

It belongs to the MOG1 family. As to quaternary structure, monomer. Interacts with RAN, both RAN-GTP and RAN-GDP. Competes with RCC1 for a common binding site on RAN and thereby inhibits RCC1-mediated nucleotide exchange. Forms a complex with RAN-GTP and RANBP1. Interacts with the cytoplasmic loop 2 of SCN5A.

It is found in the nucleus. The protein localises to the cytoplasm. The protein resides in the perinuclear region. Its subcellular location is the cell membrane. May regulate the intracellular trafficking of RAN. Promotes guanine nucleotide release from RAN and inhibits binding of new GTP by preventing the binding of the RAN guanine nucleotide exchange factor RCC1. Regulates the levels of GTP-bound RAN in the nucleus, and thereby plays a role in the regulation of RAN-dependent mitotic spindle dynamics. Enhances the expression of SCN5A at the cell membrane in cardiomyocytes. The polypeptide is Ran guanine nucleotide release factor (RANGRF) (Bos taurus (Bovine)).